The chain runs to 57 residues: UPF0391 membrane protein Nwi_2359 (57 aa).

2 consecutive transmembrane segments (helical) span residues 4 to 24 and 30 to 50; these read WVVT…GGIA and IAKI…VVGF.

Belongs to the UPF0391 family.

The protein resides in the cell membrane. This chain is UPF0391 membrane protein Nwi_2359, found in Nitrobacter winogradskyi (strain ATCC 25391 / DSM 10237 / CIP 104748 / NCIMB 11846 / Nb-255).